A 3646-amino-acid chain; its full sequence is MKDFLKKVLILFTVLLMSMPSSVLNLGTSVVRADDPLNIETRRIDEHTTITQNGCYRKIEKTDATDWTVPRKPIDLVILQDASGSFRTTIPSVKNALKRLTTYVSPEQYDENDPHLVKTDDPRTTDRVFVASYQGLDQVRYFENNDFSGNPANVYTDANSTGKNYTYGNSGLTSDQNKVHNFIDNIAVDGGTPTVPAIDDTIAQYNRVKGNMENGRKTVFLLVTDGVANGYRLPGTNTVVMDKSWTRTDAIQKAWRVDSYPEAAQDIIGRANELKAAGNQLKAAVGSEGSVVVGFWERVDNFTEKYYQYGPAYLNGFGNTINIGDNRSVQAIFHDALQSMASPDKVVNGKNVSFYVNEQNNIDVFSQKILESVAAALVKDDITGEFDITEGYKVDAIRINGKKIVPKVTDPSKEIRGTITQTGNKVKISVPDSVFNPGKNSFDYDLSKEARAPETDEDSEVDPPENYVPEKEEITVPELTGKFKAGDFETRQIGGRNQTVEVQKLEYCYPSATKTVKDADASNDIGVIPDPLELTKKPSYSAQLSKKDEEFTYTVDYNFNNVPYEFEKNVMLTDPIDYRLEVVSHSAQGPDGQSWPTRVVTQQDAGGNSQSVVVADVPPQGKDYNYLIMKKAKLKMTVRLKEEYRKNQASKAYLAILQNNNGYGLVNQGNIMWNGEDDSPNQDAHAKTKDKASTIRRSNPIYVKPPLDTEVDKKVNEKEHEGLQADGEEFEYKVTAPWPGIADKFTLTDTVVDELEIVPNSAKVTVAGKSYNALTKAISINGQTIDITLDKAQLTSLNRLISRRGGSEVQEIELIFKAKIRPGADLSKYKKNGAVNIPNTADVILNDKKKTSKEVTVTPPKPKEPTVSKKINNTLDSLVTFDGQPYTYNITTAVPSDVAGYKKFVISDKLDADLEFDGQASISGPLADVFEIQTNGQTVTATVKEGKFKELAKYSFVELTIPAKVKAGVTGKTIENKAKISFTNENNVAKEVESNPVTVTPPPVTKKINENLDHLDIATGQPYKYNVKTTLPSDITSYKEFVITDTLEDELSVINEGTDKPVISGPAAEFFDVTVSGQKVTATMKNFAGASALAGQEIELVIPAKINDGVTRSNIPNKATFSFKDKNDHKGEKETIPVTVTPPTEPNVSKKINGDQDNATIAAETDFTYNIKTTLPNDIDTYKSFAITDTLDENLGVVNPEPSISEEAKKFFDITVSGNTVTATMKDFAKASALANKEIELVIHAKVKKESVLPEIPNTAKITYTNKNNESKEKETEPVKVTPPPITKKVNGKDQEDLASLTSTFKYTVDSKVPIVADKFVLSDTLEEVLTFDGDATVTIDGQTVTDVTVAKKDQKLTVTFDKDQVKKYAGKAVQVAFDAKIKSGYTVDQLVAKYPNGDKAAIPNKASFVVNDNPETEKFSNPVTVTPPPPNTPEIEKKVNGADSYNLQTRLEEFTYSLNTAMPTNATEFTVTDELKSVLEFAGKKGDVQVKIDGKAANDQATISTDKNTLTVAFAEKAVKANAGKSIEVTFKAKIREGANLLDYLVPGQGIRIPNKASYDIDHNPKFHKDSNEVPVTPPSPEQPPIEKDVNDKAEATLEARDEEFTYHVKTKIPYEATAFNITDTLKEVLDFSGEKGQAEATVDGKKLSDDHIAINGQTITVTLNQEELKANADKEIKLTFKAKIRPNANLAAYVVGDKVVINNQASYNVDLPDNPGVHKDSNIVPVTPPSPEKPEIEKTVNDAKEATLANRDEIFTYKVKTKVPFDATAFSIDDTIKDVLEFADAGSATLNGEALEADRISIADQKITLTLTEDQVKNNGGKEVVLTFKAKIRQGANLSGYIEKGKTVINNQASYNAAFPNDPNFHKDSNIVPVTPPNPENPPIEKKVNEAESANLGARDEEFTYTIDTTVPLDVTGFAVYDTIEKVLEFSGENGQASATVDGQPLDASHITIKGQKITVKLTEDEAKALGGKAVHVSFKAKIKAGANLSDYIEKDGTTRIYNTAKYNFNNDPGTEQSSKPVPVIPPTPTEPELKKEVNGKEAETLANRDDVFTYTVKTTVPQDATAFSISDSLVPVLEFAGEDAEASLTLNGEKLDAKQIKLKDQTISAELTEAQVKANGGKEVVLNFKAKIREGANLADYIEADGVTRVPNKASYVANFPHRPKVEKDSNIVPVTPPSPENPPVEKKVNNKPSATLDSRDEEFTYTIDTKVPVDATGFKITDELKDVLEFSGKKGQAEVTVDGDKDVIEDSQITVDKQVLTVTLTKDQVKKYGNKAVHVSFKAKIRKNVSLAGYIEADGVTRIPNIAKYIINDDPKTEKSTEPVPVIPPSPEEPGIKKEVNGQPEATLKERYEEFTYKVTTSVPQDATAFSVSDTLVPVLEFSGEKGQATATLDGQEIDANRINVADQTISMALTEDEVKANGGKEVTLTFKAKIREGANLSAYIEKGKTSIPNTASYTAGFPNRPEIHKDSNRVPVTPPTPEEPEIKKDVNGKEEETLANRNDEFTYHINTKVPFDATAFSINDELKDVLEFADGTGRATASLNGQALDADRISINGQTITVNLTEEQVKNNGGKDVNLTFTAKIRQGVNLSGYIKDGKTSIPNKASYRVDFPNNPGVTKDSNEVPVTPPSPENPPIEKKVNEAESANLGARDEEFTYTIDTTVPLDVTGFAVYDTIEKVLEFSGENGQASATVDGQPLDASHITIKGQKITVKLTEDEAKALGGKAVHVSFKAKIKAGANLSDYIEKDGTTRIYNTAKYNFNNDPGTEQSSKPVPVIPPTPTEPELKKEVNGKEAETLANRDDVFTYTVKTTVPQDATAFSISDKLEDVLEFAGESSATLAGEDLKADQITTDGQIIKLTLTEDQVKANGGKEVVLNFKAKIREGANLSAYMKADKAEVPNKASYTVGFPNKPAVTKDSNEVPVTPPSPEQPPIEKDVNSKPSETIADRTEEFTYNIHTTMPQDATGFTVTDELKDVLEFAGDVQVTLGGKKADAAVAKNGQTLEVTFPEETVKANGGKKVQVTFKAKIKADADLTPYETANSYSVPNTASYLINNNPTSKKETKPVTVEVPKQPGPEVTKKINRTLDHLDVDRDVPYMYNVNTQIPKDIRLYKEFTVTDTLEPVLEITGTPVAYVDGYATDAVETKVEGNTVTVTVKDFARISGYKEIQLYIPAKLKADSDLSAYENQTVPNKATIAFKDSNGKNGTKESNPVTVRPRDPEKPEEPKPNEPAKTVGPADGSNPSTAYRLKELKEGFRFDVTAKVPTDPVDESGNPIKDAQGRDVKTELNSFTVTDELEKVLKVDRVAVKVEENKVAEAIAKITAKIEKAESDLKELEGKETNGTFAKKLAEAEKKVEELTAQLAAAKEKAAAAPATPAPASDSDAGNATATPAPADNNAEVAALEESLKAAQAELEQLKADGAKAGNLATPEEQKVEQDKLNKNLEQLKESKEKLEKALEAFTTVNDKGEITDEALAKIAKVTVEGQKVTVEVTDKAVLEALKGSTFRVIIYSSIKDGADLSSYLNKENNETKIPNKATVTFNDKPKVTNTVNVYPPEPTTPPQTPPHTPPTTPGTPPPTTPDTPPAPKGDLPPAPTPEPEKPKNILPKTGTSATMVNEVIIGMILVLMGLLLRRKPKH.

The signal sequence occupies residues 1–33 (MKDFLKKVLILFTVLLMSMPSSVLNLGTSVVRA). Positions 34-359 (DDPLNIETRR…KNVSFYVNEQ (326 aa)) are does not bind platelets. Residues 34-690 (DDPLNIETRR…NQDAHAKTKD (657 aa)) are F2, binds platelets, fibronectin, vitronectin, salivary pellicle, causes ADP secretion by dense granules. The binds platelets stretch occupies residues 34-1328 (DDPLNIETRR…KFVLSDTLEE (1295 aa)). Positions 75-373 (DLVILQDASG…VFSQKILESV (299 aa)) constitute a VWFA domain. The Integrin-like recognition motif NGR signature appears at 214 to 216 (NGR). The Integrin-like recognition motif RGT signature appears at 416 to 418 (RGT). Residues 439–466 (KNSFDYDLSKEARAPETDEDSEVDPPEN) are disordered. Residues 445–454 (DLSKEARAPE) show a composition bias toward basic and acidic residues. Positions 485 to 487 (AGD) match the Integrin-like recognition motif AGD motif. The interval 709–3205 (TEVDKKVNEK…TVPNKATIAF (2497 aa)) is central region with RrgB repeats. Composition is skewed to basic and acidic residues over residues 1124–1135 (KDKNDHKGEKET) and 1563–1573 (DHNPKFHKDSN). Disordered stretches follow at residues 1124-1153 (KDKN…KKIN), 1563-1589 (DHNP…PIEK), 2011-2036 (FNND…EPEL), 2170-2198 (EKDS…KPSA), 2320-2343 (KTEK…IKKE), 2467-2492 (PNRP…PEIK), 2611-2644 (ASYR…PIEK), 2767-2792 (FNND…EPEL), 2916-2948 (PNKP…NSKP), 3202-3252 (TIAF…NPST), 3371-3412 (AAAK…AALE), and 3550-3618 (NDKP…PKTG). Over residues 2011–2022 (FNNDPGTEQSSK) the composition is skewed to polar residues. A compositionally biased stretch (polar residues) spans 2767–2778 (FNNDPGTEQSSK). Residues 3210 to 3220 (GKNGTKESNPV) show a composition bias toward polar residues. A compositionally biased stretch (basic and acidic residues) spans 3223-3237 (RPRDPEKPEEPKPNE). Coiled-coil stretches lie at residues 3326 to 3376 (IAKI…AKEK) and 3408 to 3475 (VAAL…VNDK). Positions 3371 to 3406 (AAAKEKAAAAPATPAPASDSDAGNATATPAPADNNA) are enriched in low complexity. Residues 3550 to 3560 (NDKPKVTNTVN) are compositionally biased toward polar residues. A compositionally biased stretch (pro residues) spans 3563–3605 (PPEPTTPPQTPPHTPPTTPGTPPPTTPDTPPAPKGDLPPAPTP). The short motif at 3614–3618 (LPKTG) is the LPXTG sorting signal element. The residue at position 3617 (Thr3617) is a Pentaglycyl murein peptidoglycan amidated threonine. Residues 3618-3646 (GTSATMVNEVIIGMILVLMGLLLRRKPKH) constitute a propeptide, removed by sortase.

Its subcellular location is the secreted. The protein localises to the cell wall. With respect to regulation, whole bacterial adhesion to Chinese hamster ovary cells expressing GPIIbIIIa is abrogated by integrin inhibitor RGDS and GPIIbIIIa inhibitor Abciximab. A cell wall protein involved with Hsa in host cell interactions required for colonization and pathogenesis. Involved in recognition of platelets. Interacts with human platelet integrin receptor GPIIbIIIa (a complex of ITGA2B and ITGB3). Involved in platelet spreading, presumably by activation of outside-in signaling leading to platelet activation and then spreading. Spreading also involves GPIIbIIIa. Binding to platelets under static conditions causes platelet dense granules to secrete ADP (similar to release induced by fibrinogen binding), has no effect on platelet alpha granule release. The N-terminal 656 aa residue fragment (called F2) also binds platelets, causes dense granule secretion and allows platelet spreading. Acts in concert with Hsa to promote binding to human fibronectin (FN1) and vitronectin (VTN), and biofilm formation. F2 bind activated platelets more strongly than unactivated platelets. Binding to both FN1 and VTN is mediated at least in part by their glycosylation. This is Platelet adherence protein A from Streptococcus gordonii (strain Challis / ATCC 35105 / BCRC 15272 / CH1 / DL1 / V288).